The chain runs to 91 residues: DNA-directed RNA polymerase subunit omega (91 aa).

Belongs to the RNA polymerase subunit omega family. The RNAP catalytic core consists of 2 alpha, 1 beta, 1 beta' and 1 omega subunit. When a sigma factor is associated with the core the holoenzyme is formed, which can initiate transcription.

The catalysed reaction is RNA(n) + a ribonucleoside 5'-triphosphate = RNA(n+1) + diphosphate. Functionally, promotes RNA polymerase assembly. Latches the N- and C-terminal regions of the beta' subunit thereby facilitating its interaction with the beta and alpha subunits. The protein is DNA-directed RNA polymerase subunit omega of Edwardsiella ictaluri (strain 93-146).